We begin with the raw amino-acid sequence, 529 residues long: Probable feruloyl esterase B-1 (529 aa).

An N-terminal signal peptide occupies residues 1–19 (MKISYFFVASLSYVSVARA). 2 disulfide bridges follow: Cys-27–Cys-75 and Cys-63–Cys-114. N-linked (GlcNAc...) asparagine glycans are attached at residues Asn-53, Asn-64, Asn-85, Asn-98, and Asn-138. 4 disulfides stabilise this stretch: Cys-187-Cys-445, Cys-256-Cys-273, Cys-282-Cys-295, and Cys-505-Cys-527. Ser-188 functions as the Acyl-ester intermediate in the catalytic mechanism. An N-linked (GlcNAc...) asparagine glycan is attached at Asn-233. Asp-257, Asp-260, Ala-262, Asp-264, and Leu-266 together coordinate Ca(2+). 3 N-linked (GlcNAc...) asparagine glycosylation sites follow: Asn-286, Asn-290, and Asn-354. Catalysis depends on charge relay system residues Asp-404 and His-444.

The protein belongs to the tannase family.

It is found in the secreted. The enzyme catalyses feruloyl-polysaccharide + H2O = ferulate + polysaccharide.. In terms of biological role, involved in degradation of plant cell walls. Hydrolyzes the feruloyl-arabinose ester bond in arabinoxylans as well as the feruloyl-galactose and feruloyl-arabinose ester bonds in pectin. The sequence is that of Probable feruloyl esterase B-1 (faeB-1) from Aspergillus terreus (strain NIH 2624 / FGSC A1156).